We begin with the raw amino-acid sequence, 350 residues long: tRNA uridine(34) hydroxylase (350 aa).

A Rhodanese domain is found at 128–221; sequence EETDYVMIDT…YMKEYPNDQF (94 aa). Residue Cys-181 is the Cysteine persulfide intermediate of the active site.

This sequence belongs to the TrhO family.

The catalysed reaction is uridine(34) in tRNA + AH2 + O2 = 5-hydroxyuridine(34) in tRNA + A + H2O. Catalyzes oxygen-dependent 5-hydroxyuridine (ho5U) modification at position 34 in tRNAs. This is tRNA uridine(34) hydroxylase from Bdellovibrio bacteriovorus (strain ATCC 15356 / DSM 50701 / NCIMB 9529 / HD100).